The following is a 933-amino-acid chain: uncharacterized protein (933 aa).

Basic and acidic residues predominate over residues 244–255 (KKDIGAKPKPVD). 2 disordered regions span residues 244–277 (KKDI…ELPD) and 343–364 (SAPH…EWKG). Positions 343 to 353 (SAPHQPSSQHA) are enriched in polar residues. Residues 771–791 (VIHGMVLMFAGGKLLFGGCVL) form a helical membrane-spanning segment. A compositionally biased stretch (basic and acidic residues) spans 890–907 (DKIEKEPPPSPEKVKPPE). The disordered stretch occupies residues 890–933 (DKIEKEPPPSPEKVKPPEIELQPFTKMRRSSKKTAGFKKLNSKK). Over residues 915–933 (KMRRSSKKTAGFKKLNSKK) the composition is skewed to basic residues.

The protein localises to the membrane. This is an uncharacterized protein from Mus musculus (Mouse).